Here is a 128-residue protein sequence, read N- to C-terminus: Sulfurtransferase TusD (128 aa).

Cys78 functions as the Cysteine persulfide intermediate in the catalytic mechanism.

This sequence belongs to the DsrE/TusD family. Heterohexamer, formed by a dimer of trimers. The hexameric TusBCD complex contains 2 copies each of TusB, TusC and TusD. The TusBCD complex interacts with TusE.

The protein localises to the cytoplasm. Functionally, part of a sulfur-relay system required for 2-thiolation of 5-methylaminomethyl-2-thiouridine (mnm(5)s(2)U) at tRNA wobble positions. Accepts sulfur from TusA and transfers it in turn to TusE. This is Sulfurtransferase TusD from Escherichia coli O17:K52:H18 (strain UMN026 / ExPEC).